A 1071-amino-acid chain; its full sequence is DNA-directed RNA polymerase subunit beta (1071 aa).

Belongs to the RNA polymerase beta chain family. In terms of assembly, in plastids the minimal PEP RNA polymerase catalytic core is composed of four subunits: alpha, beta, beta', and beta''. When a (nuclear-encoded) sigma factor is associated with the core the holoenzyme is formed, which can initiate transcription.

It localises to the plastid. Its subcellular location is the chloroplast. The catalysed reaction is RNA(n) + a ribonucleoside 5'-triphosphate = RNA(n+1) + diphosphate. Its function is as follows. DNA-dependent RNA polymerase catalyzes the transcription of DNA into RNA using the four ribonucleoside triphosphates as substrates. The sequence is that of DNA-directed RNA polymerase subunit beta from Acorus gramineus (Dwarf sweet flag).